Reading from the N-terminus, the 200-residue chain is Peptidyl-tRNA hydrolase (200 aa).

Tyrosine 15 serves as a coordination point for tRNA. Residue histidine 20 is the Proton acceptor of the active site. Phenylalanine 66, asparagine 68, and asparagine 114 together coordinate tRNA.

This sequence belongs to the PTH family. In terms of assembly, monomer.

It is found in the cytoplasm. It catalyses the reaction an N-acyl-L-alpha-aminoacyl-tRNA + H2O = an N-acyl-L-amino acid + a tRNA + H(+). Functionally, hydrolyzes ribosome-free peptidyl-tRNAs (with 1 or more amino acids incorporated), which drop off the ribosome during protein synthesis, or as a result of ribosome stalling. In terms of biological role, catalyzes the release of premature peptidyl moieties from peptidyl-tRNA molecules trapped in stalled 50S ribosomal subunits, and thus maintains levels of free tRNAs and 50S ribosomes. This Ralstonia nicotianae (strain ATCC BAA-1114 / GMI1000) (Ralstonia solanacearum) protein is Peptidyl-tRNA hydrolase.